The chain runs to 1040 residues: Multidrug resistance protein MdtB (1040 aa).

The next 11 membrane-spanning stretches (helical) occupy residues 15-37 (LFIM…GIIG), 345-362 (FELM…YLFL), 367-389 (ATII…MVFL), 396-418 (LTLM…VIEN), 438-460 (GEIG…PLLF), 472-494 (FAIT…TPMM), 535-557 (HPWL…WVFI), 867-889 (VWLI…ESFI), 909-931 (LMIA…IGIV), 968-990 (ILMT…GVGA), and 1000-1022 (MVGG…YLLF).

The protein belongs to the resistance-nodulation-cell division (RND) (TC 2.A.6) family. MdtB subfamily. As to quaternary structure, part of a tripartite efflux system composed of MdtA, MdtB and MdtC. MdtB forms a heteromultimer with MdtC.

The protein resides in the cell inner membrane. In terms of biological role, the MdtABC tripartite complex confers resistance against novobiocin and deoxycholate. In Escherichia coli O157:H7, this protein is Multidrug resistance protein MdtB.